The following is a 250-amino-acid chain: Accessory gland-specific peptide 26Aa (250 aa).

The first 18 residues, 1–18, serve as a signal peptide directing secretion; the sequence is MNQILLCSQILLLFFTVA. A disordered region spans residues 79-100; it reads DYPINNSKSRKNSSTLPSPILT. Over residues 82–95 the composition is skewed to polar residues; sequence INNSKSRKNSSTLP. Asn83, Asn90, and Asn131 each carry an N-linked (GlcNAc...) asparagine glycan. 2 disordered regions span residues 172 to 191 and 230 to 250; these read NVQNARKSTKSCKKRPSKDI and NNPATDVPTGKSPSEGNPSTT. Basic residues predominate over residues 178-187; that stretch reads KSTKSCKKRP. Residues 240-250 are compositionally biased toward polar residues; the sequence is KSPSEGNPSTT.

Proteolytically cleaved as it is secreted and in the recipient female. As to expression, main cells of the accessory glands of males.

The protein resides in the secreted. The protein localises to the extracellular space. Functionally, this protein is transferred from male to female's hemolymph during mating, affecting egglaying and behavior after mating. This chain is Accessory gland-specific peptide 26Aa (Acp26Aa), found in Drosophila mauritiana (Fruit fly).